Consider the following 433-residue polypeptide: Cell division control protein KAR1 (433 aa).

Disordered regions lie at residues 1-38, 69-101, and 207-227; these read MNVTSPKDGNHSFSKKNRFNTNKPRFHKLNEQAQSINL, TKNINSDSDRSNDTIKQNNYNKRETGYNPFYNG, and KPLPLPYLNSPNSDSTPTLQR. The residue at position 233 (Thr233) is a Phosphothreonine.

As to quaternary structure, interacts with SPC72.

It localises to the cytoplasm. The protein resides in the cytoskeleton. It is found in the microtubule organizing center. The protein localises to the spindle pole body. Its function is as follows. KAR1 is required for function of both intranuclear and extranuclear microtubules. KAR1 helps localize CDC31 to the spindle pole body (SPB), CDC31 then initiates SPB duplication via interaction with a downstream effector. This Saccharomyces cerevisiae (strain ATCC 204508 / S288c) (Baker's yeast) protein is Cell division control protein KAR1 (KAR1).